Consider the following 475-residue polypeptide: GDP-fucose protein O-fucosyltransferase 3 (475 aa).

The Cytoplasmic segment spans residues Met-1 to Arg-8. A helical; Signal-anchor for type II membrane protein transmembrane segment spans residues Leu-9 to Ile-29. Residues Thr-30–Gln-475 lie on the Lumenal side of the membrane. N-linked (GlcNAc...) asparagine glycosylation is found at Asn-107, Asn-165, and Asn-315. Cys-386 and Cys-389 are oxidised to a cystine. Asn-462 is a glycosylation site (N-linked (GlcNAc...) asparagine).

The protein belongs to the glycosyltransferase 10 family.

It localises to the endoplasmic reticulum membrane. It carries out the reaction L-threonyl-[protein] + GDP-beta-L-fucose = 3-O-(alpha-L-fucosyl)-L-threonyl-[protein] + GDP + H(+). It catalyses the reaction L-seryl-[protein] + GDP-beta-L-fucose = 3-O-(alpha-L-fucosyl)-L-seryl-[protein] + GDP + H(+). It functions in the pathway protein modification; protein glycosylation. In terms of biological role, protein O-fucosyltransferase that specifically catalyzes O-fucosylation of serine or threonine residues in EMI domains of target proteins. Attaches fucose through an O-glycosidic linkage. O-fucosylation of EMI domain-containing proteins may be required for facilitating protein folding and secretion. This is GDP-fucose protein O-fucosyltransferase 3 (FUT10) from Gallus gallus (Chicken).